We begin with the raw amino-acid sequence, 508 residues long: Probable metalloreductase AIM14 (508 aa).

Transmembrane regions (helical) follow at residues 18–38 (LPYG…LIVM), 70–90 (PLLL…VAYI), 100–120 (LSYV…NPIL), 137–157 (FVTV…SLDP), 168–188 (LFNF…FASV), 198–218 (SFYV…PIHA), 222–242 (VTVP…ISYI), and 347–367 (VAIV…KYLQ). The region spanning 97 to 214 (LGRLSYVLVI…LGQWAMVFLV (118 aa)) is the Ferric oxidoreductase domain. One can recognise an FAD-binding FR-type domain in the interval 241-361 (YIYYSTTVNV…GGSGISFGLS (121 aa)).

Belongs to the ferric reductase (FRE) family. AIM14 subfamily.

It is found in the membrane. In terms of biological role, probable cell surface metalloreductase. May be involved in iron or copper homeostasis. The polypeptide is Probable metalloreductase AIM14 (AIM14) (Kluyveromyces lactis (strain ATCC 8585 / CBS 2359 / DSM 70799 / NBRC 1267 / NRRL Y-1140 / WM37) (Yeast)).